A 1404-amino-acid chain; its full sequence is MVLLCKYKVSWVFVLSVAGSSLIRDFLFGQDDSLSIEKRTNEYTTPEYGGTSHCNGGDKNCYPQCFDHRGQPKKDKCCFDKHNKVLYPYPCTSSSSSSSSSSTVSSSSSEVISSSSEEASSSEITSSSEISSSSEVSSSSEVLSSSEIISSSSEVVSSSSKVSSSSEATSSSSEIISSSSEVVSSSSQVTSSSEVVSSSSEVVSSSSEVSSSSEVVSSSSEVSSSSEVSSSSEVSSSSQVTSSSEIVSSSSEVSSSSSEVVSSSSEVSSSSEVVSSSSEVSSSSEVSSSSEVSSSSEVSSSSEVSSSSQVISSSEVVSSSSEVVSSSSEVSSSSEVSSSSEVVSSSSEVSSSSEVSSSSEVSSSSQVTSSSEIVSSSSEVSSSSSEVVSSSSEVSSSSEVVSSSSEVSSSSEVSSSSEVSSSSEVSSSSEVSSSSQVTSSSEVVSSSSEVSSSSEVVSSSSEVSSSSEVSSSSEVSSSSQVTSSSEIVSSSSEVSSSSSEVVSSSSEVSSSSEVVSSSSEVSSSSEVSSSSEVSSSSQVTSSSEIVSSSSEVSSSSSEVVSSSSEVSSSSEVVSSSSEVSSSSEVSSSSEVSSSSQVTSSSEVVSSSSEVVSSSSEVSSSSEVSSSSEVSSSSEVSSSSEVSSSSQVTSSSEIVSSSSEVSSSSSEVVSSSSEVSSSSEVVSSSSEVSSSSEVSSSSEVSSSSQVTSSSEVVSSSSEVVSSSSEVSSSSEVSSSSEVSSSSEVSSSSEVSSSSEVTSSSSEIISSSSSSEVTSSSEVSSSSQATSSSSEIISSSSKVSSSSEITSSSECISSTSEVNSSSSEVVSSSSASSEVVSSSTECISSSSEAISSSSQVTSSSTECISSSSEVISSSEVTSCSSEVVSSSETCISSKEMSSSEQISSSESTSSCSEFVSKSSEHSSLSSESCPSEETSTVSETSSETVTCKHHGCSKTKTHHSTPTKCVTKTIETSVYVTTCPDKSITTETAVVIVVTNESTATTYTEIIKTTVIEGNTLTTNIPIKHVETETAEIIEYTTICPTTLPNGHKTTVIAGIAVGTNGQGQKVTKTVPLEYNESTLANGHVTRVASGIVKATGENGEEITKTIPIEYRKTTERIEFITVCPTTLANGQVIETTAGIVITTNKQGEKVTKPVPLEFTSTIEFSHHLTTHPVTLPNGQITVTTEGVIITRKGEQQFTKTVEVGNLPSKPIEVVQKISVVPKTLPNSQVTSETVAILVTVGEELQPITKTIPIGTSAQETEPSFASYSEIVFTTCSEGGCNTYTTNVEVIGNKVITKQSGKPIVEEQTTNGIEHQSDKVYYTVVSGETKTIQTPGSIVSTSPAAIPVVTSKGSPNIVGSSVVAGSSVTTSEVSTSTAGVLQGNAASRQSFNYKFIVGLILAYIIA.

Residues 1–19 form the signal peptide; the sequence is MVLLCKYKVSWVFVLSVAG. Repeat copies occupy residues 104–109, 136–141, 156–161, 162–167, 183–188, 196–201, 203–208, 209–214, 216–221, 222–227, 228–233, 234–239, 247–252, 253–258, 261–266, 267–272, 274–279, 280–285, 286–291, 292–297, 298–303, 304–309, 317–322, 324–329, 330–335, 336–341, 343–348, 349–354, 355–360, 361–366, 374–379, 380–385, 388–393, 394–399, 401–406, 407–412, 413–418, 419–424, 425–430, 431–436, 444–449, 450–455, 457–462, 463–468, 469–474, 475–480, 488–493, 494–500, 502–507, 508–513, 515–520, 521–526, 527–532, 533–538, 546–551, 552–557, 560–565, 566–571, 573–578, 579–584, 585–590, 591–596, 604–609, 611–616, 617–622, 623–628, 629–634, 635–640, 641–646, 654–659, 660–665, 668–673, 674–679, 681–686, 687–692, 693–698, 699–704, 712–717, 719–724, 725–730, 731–736, 737–742, 743–748, 749–754, 771–776, 777–782, and 797–802. Residues 104–541 form an 88 X 6 AA approximate tandem repeats region; sequence VSSSSSEVIS…EVSSSSQVTS (438 aa). The tract at residues 113–833 is disordered; that stretch reads SSSSEEASSS…VSSSSASSEV (721 aa). Residue Asn817 is glycosylated (N-linked (GlcNAc...) asparagine). One copy of the 1-88 repeat lies at 824–829; the sequence is VSSSSA. Asn994 and Asn1074 each carry an N-linked (GlcNAc...) asparagine glycan. Asn1382 is lipidated: GPI-anchor amidated asparagine. The propeptide at 1383-1404 is removed in mature form; that stretch reads AASRQSFNYKFIVGLILAYIIA.

The protein resides in the cell membrane. Predicted GPI-anchored adhesin-like protein which may be involved in filamentous growth and chlamydospore formation. This is Probable GPI-anchored adhesin-like protein PGA55 (PGA55) from Candida albicans (strain SC5314 / ATCC MYA-2876) (Yeast).